Consider the following 206-residue polypeptide: MREAVSKTTTVGLVTGDYVVLAADKRATAGPMVYHKAVKKISKITDYAALTISGLVADAQYIVENARYIAREYEIEMGGPIPIKALASRISLILSVYLRYSPFIVQLLLGGRDSTGASLYYMDLYGSVTREKYMATGSGSPVAFGILEKNYRSDLSLEEAKKLAFNAVSSAIMRDGFSGEGVDIVVIGPGIYSEETIPLKKTIESS.

Positions 1–7 are cleaved as a propeptide — removed in mature form; by autocatalysis; the sequence is MREAVSK. Thr-8 acts as the Nucleophile in catalysis.

It belongs to the peptidase T1B family. The 20S proteasome core is composed of 14 alpha and 14 beta subunits that assemble into four stacked heptameric rings, resulting in a barrel-shaped structure. The two inner rings, each composed of seven catalytic beta subunits, are sandwiched by two outer rings, each composed of seven alpha subunits. The catalytic chamber with the active sites is on the inside of the barrel. Has a gated structure, the ends of the cylinder being occluded by the N-termini of the alpha-subunits. Is capped at one or both ends by the proteasome regulatory ATPase, PAN.

It is found in the cytoplasm. It catalyses the reaction Cleavage of peptide bonds with very broad specificity.. The formation of the proteasomal ATPase PAN-20S proteasome complex, via the docking of the C-termini of PAN into the intersubunit pockets in the alpha-rings, triggers opening of the gate for substrate entry. Interconversion between the open-gate and close-gate conformations leads to a dynamic regulation of the 20S proteasome proteolysis activity. Its function is as follows. Component of the proteasome core, a large protease complex with broad specificity involved in protein degradation. The polypeptide is Proteasome subunit beta 2 (Desulfurococcus amylolyticus (strain DSM 18924 / JCM 16383 / VKM B-2413 / 1221n) (Desulfurococcus kamchatkensis)).